The chain runs to 330 residues: MADLIARLREDGIQKRVIQEGRGELPEFQDGTKATFHFRTLHSDPEGSVIDDSRARGKPMELIIGKKFKLPVWETIVRTMREGETAQFLCDVKHTVLYPLVAKSLRNIAEGKDPLEGQRHCCGIAQMHEHSSLGHADLDALQQNPQPLIFHIEMLKVESPGTYQQDPWAMTDEEKAKAVPLIHQEGNRLYREGQVKEAAAKYYDAIACLKNLQMKEQPGSPDWIQLDLQITPLLLNYCQCKLVAQEYYEVLDHCSSILNKYDDNVKAYFKRGKAHAAVWNAQEAQADFAKVLELDPALAPVVSRELRALEARIRQKDEEDKARFRGIFSH.

A PPIase FKBP-type domain is found at 31 to 121 (GTKATFHFRT…KDPLEGQRHC (91 aa)). Serine 43 carries the phosphoserine modification. TPR repeat units lie at residues 179–212 (VPLIHQEGNRLYREGQVKEAAAKYYDAIACLKNL), 231–264 (TPLLLNYCQCKLVAQEYYEVLDHCSSILNKYDDN), and 265–298 (VKAYFKRGKAHAAVWNAQEAQADFAKVLELDPAL).

In terms of assembly, interacts with RET in the pituitary gland; this interaction prevents the formation of the AIP-survivin complex.

It localises to the cytoplasm. In terms of biological role, may play a positive role in AHR-mediated (aromatic hydrocarbon receptor) signaling, possibly by influencing its receptivity for ligand and/or its nuclear targeting. The polypeptide is AH receptor-interacting protein (Aip) (Rattus norvegicus (Rat)).